A 321-amino-acid polypeptide reads, in one-letter code: Probable heme-iron transport system permease protein IsdF (321 aa).

The next 9 membrane-spanning stretches (helical) occupy residues 9–29 (LLFL…FVTG), 61–81 (ILIA…LQAA), 89–109 (ANII…MLFI), 114–134 (FYLP…IILL), 143–163 (VSMI…LEIL), 179–199 (IWSD…LTLL), 233–253 (VFLA…GIIV), 267–287 (LIPF…LLGR), and 294–314 (EIPA…YLIC).

It belongs to the binding-protein-dependent transport system permease family. FecCD subfamily.

The protein resides in the cell membrane. Part of the binding-protein-dependent transport system for heme-iron. Responsible for the translocation of the substrate across the membrane. This chain is Probable heme-iron transport system permease protein IsdF (isdF), found in Staphylococcus aureus (strain NCTC 8325 / PS 47).